Consider the following 294-residue polypeptide: Ribosomal protein L11 methyltransferase (294 aa).

Threonine 145, glycine 167, aspartate 189, and asparagine 230 together coordinate S-adenosyl-L-methionine.

This sequence belongs to the methyltransferase superfamily. PrmA family.

It localises to the cytoplasm. It catalyses the reaction L-lysyl-[protein] + 3 S-adenosyl-L-methionine = N(6),N(6),N(6)-trimethyl-L-lysyl-[protein] + 3 S-adenosyl-L-homocysteine + 3 H(+). Functionally, methylates ribosomal protein L11. This is Ribosomal protein L11 methyltransferase from Alkalilimnicola ehrlichii (strain ATCC BAA-1101 / DSM 17681 / MLHE-1).